Here is a 457-residue protein sequence, read N- to C-terminus: Ribulose bisphosphate carboxylase-like protein (457 aa).

Mg(2+) is bound by residues Lys199, Asp201, and Glu202. Lys199 is subject to N6-carboxylysine. Residues 426–457 (AIAAFGKPAHGQAASPQPSEQASEPDAAGGDS) form a disordered region.

Belongs to the RuBisCO large chain family. Type IV subfamily. Mg(2+) serves as cofactor.

In terms of biological role, may be involved in sulfur metabolism and oxidative stress response. Does not show RuBisCO activity. This Allochromatium vinosum (strain ATCC 17899 / DSM 180 / NBRC 103801 / NCIMB 10441 / D) (Chromatium vinosum) protein is Ribulose bisphosphate carboxylase-like protein.